A 214-amino-acid polypeptide reads, in one-letter code: Adenylate kinase (214 aa).

Position 10–15 (10–15) interacts with ATP; it reads GAGKGT. The segment at 30–59 is NMP; the sequence is STGDMLRAAVKAGTELGKQAKEIMDAGKLV. AMP is bound by residues threonine 31, arginine 36, 57 to 59, 85 to 88, and glutamine 92; these read KLV and GFPR. An LID region spans residues 122–159; that stretch reads GRRVHAASGRVYHVKFNPPKVEGKDDVTGEDLTIRKDD. ATP is bound by residues arginine 123 and 132–133; that span reads VY. 2 residues coordinate AMP: arginine 156 and arginine 167. Arginine 200 contacts ATP.

Belongs to the adenylate kinase family. Monomer.

The protein localises to the cytoplasm. It catalyses the reaction AMP + ATP = 2 ADP. It participates in purine metabolism; AMP biosynthesis via salvage pathway; AMP from ADP: step 1/1. Its function is as follows. Catalyzes the reversible transfer of the terminal phosphate group between ATP and AMP. Plays an important role in cellular energy homeostasis and in adenine nucleotide metabolism. This chain is Adenylate kinase, found in Pectobacterium carotovorum subsp. carotovorum (strain PC1).